Reading from the N-terminus, the 962-residue chain is UPF0182 protein SACE_1102 (962 aa).

7 consecutive transmembrane segments (helical) span residues 10–30 (ILLI…RLLG), 55–75 (LGLG…NLWI), 106–126 (LFGW…AQSD), 168–188 (FVAI…FGGI), 203–223 (IQLS…YFLD), 250–270 (VKLI…AAIF), and 279–299 (IATV…PALL). Disordered stretches follow at residues 707–730 (RTFW…GNQQ) and 876–916 (FGPG…EMTK). Residues 899-910 (GQQPPTQQPPAG) are compositionally biased toward pro residues.

The protein belongs to the UPF0182 family.

It is found in the cell membrane. The sequence is that of UPF0182 protein SACE_1102 from Saccharopolyspora erythraea (strain ATCC 11635 / DSM 40517 / JCM 4748 / NBRC 13426 / NCIMB 8594 / NRRL 2338).